Here is a 485-residue protein sequence, read N- to C-terminus: Rop guanine nucleotide exchange factor 2 (485 aa).

Residues 1–36 (MENLPNHEENDDVGYHQSPGPIDPNDHSASETPVYS) are disordered. One can recognise a PRONE domain in the interval 107 to 485 (LAVQEISEPE…YVDKTMRGEE (379 aa)).

In terms of assembly, interacts with ARC10/ROP11. Expressed in the vascular tissues of roots, leaves, sepals, petals and siliques.

In terms of biological role, guanine-nucleotide exchange factor (GEF) that acts as an activator of Rop (Rho of plants) GTPases by promoting the exchange of GDP for GTP. In Arabidopsis thaliana (Mouse-ear cress), this protein is Rop guanine nucleotide exchange factor 2 (ROPGEF2).